The chain runs to 273 residues: MTTLQQPQATESHNTDVALSLQNVTISYGNFEAVKNVYCEIPRGKVTAFIGPSGCGKSTVLRSLNRMNDLIEGCSLKGSILFGGVDLYGPKIDPVEVRRRIGIVFQQPNPFPKSIYENIAFGARINGYTGDMDELVERSLRQAAVWDECKDKLNESGYSLSGGQQQRLCIARTIAIQPEVILMDEPCSALDPISTLKIEETMHELKKSFTIVIVTHNMQQAVRVSDMTAFYNAEAVEGGTGKVGYLVEFNDTDKIFNAPQQQATQDYVSGRFG.

The region spanning 19–258 is the ABC transporter domain; the sequence is LSLQNVTISY…FNDTDKIFNA (240 aa). 51–58 contributes to the ATP binding site; that stretch reads GPSGCGKS.

Belongs to the ABC transporter superfamily. Phosphate importer (TC 3.A.1.7) family. As to quaternary structure, the complex is composed of two ATP-binding proteins (PstB), two transmembrane proteins (PstC and PstA) and a solute-binding protein (PstS).

The protein resides in the cell inner membrane. It carries out the reaction phosphate(out) + ATP + H2O = ADP + 2 phosphate(in) + H(+). Part of the ABC transporter complex PstSACB involved in phosphate import. Responsible for energy coupling to the transport system. This Synechococcus sp. (strain CC9605) protein is Phosphate import ATP-binding protein PstB.